The sequence spans 207 residues: 3-isopropylmalate dehydratase small subunit (207 aa).

This sequence belongs to the LeuD family. LeuD type 1 subfamily. Heterodimer of LeuC and LeuD.

The catalysed reaction is (2R,3S)-3-isopropylmalate = (2S)-2-isopropylmalate. The protein operates within amino-acid biosynthesis; L-leucine biosynthesis; L-leucine from 3-methyl-2-oxobutanoate: step 2/4. Catalyzes the isomerization between 2-isopropylmalate and 3-isopropylmalate, via the formation of 2-isopropylmaleate. The chain is 3-isopropylmalate dehydratase small subunit (leuD) from Buchnera aphidicola subsp. Pterocomma populeum.